We begin with the raw amino-acid sequence, 444 residues long: Proline--tRNA ligase (444 aa).

This sequence belongs to the class-II aminoacyl-tRNA synthetase family. ProS type 2 subfamily. In terms of assembly, homodimer.

The protein resides in the cytoplasm. It carries out the reaction tRNA(Pro) + L-proline + ATP = L-prolyl-tRNA(Pro) + AMP + diphosphate. Catalyzes the attachment of proline to tRNA(Pro) in a two-step reaction: proline is first activated by ATP to form Pro-AMP and then transferred to the acceptor end of tRNA(Pro). The polypeptide is Proline--tRNA ligase (Bradyrhizobium sp. (strain BTAi1 / ATCC BAA-1182)).